Consider the following 245-residue polypeptide: GDSL esterase/lipase At4g16220 (245 aa).

The signal sequence occupies residues 1-24 (MSSLVSRCQVIALLVLFFFGVCLA). The active-site Nucleophile is Ser37.

This sequence belongs to the 'GDSL' lipolytic enzyme family.

It is found in the secreted. This chain is GDSL esterase/lipase At4g16220, found in Arabidopsis thaliana (Mouse-ear cress).